Here is a 223-residue protein sequence, read N- to C-terminus: Ribonuclease 3 (223 aa).

In terms of domain architecture, RNase III spans 4–127; sequence LEEFERNLGY…VMGAIYLEAG (124 aa). Glutamate 40 is a binding site for Mg(2+). Residue aspartate 44 is part of the active site. Residues aspartate 113 and glutamate 116 each contribute to the Mg(2+) site. The active site involves glutamate 116. The DRBM domain maps to 154 to 223; that stretch reads DYKTALQEVT…AKIALEKIKK (70 aa).

This sequence belongs to the ribonuclease III family. Homodimer. Requires Mg(2+) as cofactor.

The protein localises to the cytoplasm. The enzyme catalyses Endonucleolytic cleavage to 5'-phosphomonoester.. Functionally, digests double-stranded RNA. Involved in the processing of primary rRNA transcript to yield the immediate precursors to the large and small rRNAs (23S and 16S). Processes some mRNAs, and tRNAs when they are encoded in the rRNA operon. Processes pre-crRNA and tracrRNA of type II CRISPR loci if present in the organism. The sequence is that of Ribonuclease 3 from Campylobacter concisus (strain 13826).